Consider the following 187-residue polypeptide: Cytokinin riboside 5'-monophosphate phosphoribohydrolase (187 aa).

Lysine 74 is covalently cross-linked (Isoglutamyl lysine isopeptide (Lys-Gln) (interchain with Q-Cter in protein Pup)). Substrate-binding positions include glutamate 80, 98–99 (RK), 115–121 (GVGTLDE), and threonine 127.

This sequence belongs to the LOG family. Homodimer. Pupylated at Lys-74 by the prokaryotic ubiquitin-like protein Pup, which leads to its degradation by the proteasome. The proteasomal control of cytokinin synthesis is essential to protect M.tuberculosis against host-produced NO.

The enzyme catalyses N(6)-(dimethylallyl)adenosine 5'-phosphate + H2O = N(6)-dimethylallyladenine + D-ribose 5-phosphate. The catalysed reaction is 9-ribosyl-trans-zeatin 5'-phosphate + H2O = trans-zeatin + D-ribose 5-phosphate. Catalyzes the hydrolytic removal of ribose 5'-monophosphate from nitrogen N6-modified adenosines, the final step of bioactive cytokinin synthesis. Is involved in the synthesis of isopentenyladenine (iP) and 2-methylthio-iP (2MeS-iP), the most abundant cytokinins detected in M.tuberculosis lysates and supernatants. Is also able to convert trans-zeatin-riboside monophosphate (tZRMP) to trans-zeatin (tZ) in vitro; however, it may not be involved in the biosynthesis of this minor cytokinin in vivo. Accumulation of Rv1205 sensitizes M.tuberculosis to nitric oxide since cytokinin breakdown products synergize with NO to kill M.tuberculosis. Shows a slow AMP hydrolase activity, but is not able to hydrolyze ATP. Displays no lysine decarboxylase (LDC) activity (L-lysine conversion to cadaverine). This Mycobacterium tuberculosis (strain ATCC 25618 / H37Rv) protein is Cytokinin riboside 5'-monophosphate phosphoribohydrolase.